A 353-amino-acid chain; its full sequence is Photosystem II D2 protein (353 aa).

At threonine 2 the chain carries N-acetylthreonine. Threonine 2 bears the Phosphothreonine mark. The helical transmembrane segment at 41–61 threads the bilayer; that stretch reads CAYFAVGGWFTGTTFVTSWYT. Histidine 118 serves as a coordination point for chlorophyll a. The helical transmembrane segment at 125 to 141 threads the bilayer; the sequence is GFMLRQFELARSVQLRP. Pheophytin a-binding residues include glutamine 130 and asparagine 143. A helical membrane pass occupies residues 153–166; that stretch reads VFVSVFLIYPLGQS. Histidine 198 is a binding site for chlorophyll a. Residues 208–228 traverse the membrane as a helical segment; the sequence is AALLCAIHGATVENTLFEDGD. Residues histidine 215 and phenylalanine 262 each contribute to the a plastoquinone site. A Fe cation-binding site is contributed by histidine 215. Residue histidine 269 coordinates Fe cation. Residues 279–295 traverse the membrane as a helical segment; sequence GLWMSALGVVGLALNLR.

This sequence belongs to the reaction center PufL/M/PsbA/D family. As to quaternary structure, PSII is composed of 1 copy each of membrane proteins PsbA, PsbB, PsbC, PsbD, PsbE, PsbF, PsbH, PsbI, PsbJ, PsbK, PsbL, PsbM, PsbT, PsbX, PsbY, PsbZ, Psb30/Ycf12, at least 3 peripheral proteins of the oxygen-evolving complex and a large number of cofactors. It forms dimeric complexes. Requires The D1/D2 heterodimer binds P680, chlorophylls that are the primary electron donor of PSII, and subsequent electron acceptors. It shares a non-heme iron and each subunit binds pheophytin, quinone, additional chlorophylls, carotenoids and lipids. There is also a Cl(-1) ion associated with D1 and D2, which is required for oxygen evolution. The PSII complex binds additional chlorophylls, carotenoids and specific lipids. as cofactor.

It is found in the plastid. It localises to the chloroplast thylakoid membrane. The enzyme catalyses 2 a plastoquinone + 4 hnu + 2 H2O = 2 a plastoquinol + O2. Photosystem II (PSII) is a light-driven water:plastoquinone oxidoreductase that uses light energy to abstract electrons from H(2)O, generating O(2) and a proton gradient subsequently used for ATP formation. It consists of a core antenna complex that captures photons, and an electron transfer chain that converts photonic excitation into a charge separation. The D1/D2 (PsbA/PsbD) reaction center heterodimer binds P680, the primary electron donor of PSII as well as several subsequent electron acceptors. D2 is needed for assembly of a stable PSII complex. This Nicotiana tabacum (Common tobacco) protein is Photosystem II D2 protein.